We begin with the raw amino-acid sequence, 238 residues long: Sugar fermentation stimulation protein homolog (238 aa).

The protein belongs to the SfsA family.

The chain is Sugar fermentation stimulation protein homolog from Actinobacillus succinogenes (strain ATCC 55618 / DSM 22257 / CCUG 43843 / 130Z).